Consider the following 502-residue polypeptide: ATP synthase subunit alpha (502 aa).

The disordered stretch occupies residues 115 to 138; the sequence is VDGLGPIETTETRPIESPAPGVMD. 169 to 176 contributes to the ATP binding site; the sequence is GDRQTGKT.

The protein belongs to the ATPase alpha/beta chains family. F-type ATPases have 2 components, CF(1) - the catalytic core - and CF(0) - the membrane proton channel. CF(1) has five subunits: alpha(3), beta(3), gamma(1), delta(1), epsilon(1). CF(0) has three main subunits: a(1), b(2) and c(9-12). The alpha and beta chains form an alternating ring which encloses part of the gamma chain. CF(1) is attached to CF(0) by a central stalk formed by the gamma and epsilon chains, while a peripheral stalk is formed by the delta and b chains.

It localises to the cell membrane. The catalysed reaction is ATP + H2O + 4 H(+)(in) = ADP + phosphate + 5 H(+)(out). Its function is as follows. Produces ATP from ADP in the presence of a proton gradient across the membrane. The alpha chain is a regulatory subunit. This is ATP synthase subunit alpha from Geobacillus sp. (strain WCH70).